The primary structure comprises 356 residues: Ornithine cyclodeaminase (356 aa).

Residues arginine 53 and lysine 77 each coordinate L-ornithine. Residues threonine 92, arginine 120, alanine 147–glutamine 148, aspartate 169, threonine 209, valine 232–aspartate 235, lysine 239, and serine 300 contribute to the NAD(+) site. Arginine 120 serves as a coordination point for L-ornithine. Aspartate 235 contacts L-ornithine. The active-site Proton donor/acceptor is the aspartate 235. Position 301 (valine 301) interacts with L-ornithine.

It belongs to the ornithine cyclodeaminase/mu-crystallin family. NAD(+) is required as a cofactor.

The catalysed reaction is L-ornithine = L-proline + NH4(+). The protein operates within amino-acid biosynthesis; L-proline biosynthesis; L-proline from L-ornithine: step 1/1. With respect to regulation, is inhibited by L-proline and L-lysine. Is not activated by small concentrations of L-arginine, and is even inhibited by about 50% at 0.5 mM L-arginine. In terms of biological role, catalyzes the conversion of L-ornithine into L-proline with release of ammonia. Is involved in the utilization of octopine, a catabolic pathway that proceeds through L-arginine and L-ornithine to L-proline. Octopine is a predominant opine in plant cells transformed with Ti plasmid pTiAch5. The sequence is that of Ornithine cyclodeaminase from Agrobacterium tumefaciens (strain Ach5).